A 508-amino-acid polypeptide reads, in one-letter code: Photosystem II CP47 reaction center protein (508 aa).

Helical transmembrane passes span 21 to 36, 101 to 115, 140 to 156, 203 to 218, 237 to 252, and 457 to 472; these read AVHIMHTALVSGWAGS, IVFSGLCFLAAIWHW, GIHLFLSGAACFGFGAF, IAAGILGILAGLFHLS, VLSSSIAAVFFAAFIV, and TFALLFFFGHIWHGAR.

Belongs to the PsbB/PsbC family. PsbB subfamily. PSII is composed of 1 copy each of membrane proteins PsbA, PsbB, PsbC, PsbD, PsbE, PsbF, PsbH, PsbI, PsbJ, PsbK, PsbL, PsbM, PsbT, PsbX, PsbY, PsbZ, Psb30/Ycf12, at least 3 peripheral proteins of the oxygen-evolving complex and a large number of cofactors. It forms dimeric complexes. Requires Binds multiple chlorophylls. PSII binds additional chlorophylls, carotenoids and specific lipids. as cofactor.

The protein resides in the plastid. It localises to the chloroplast thylakoid membrane. Functionally, one of the components of the core complex of photosystem II (PSII). It binds chlorophyll and helps catalyze the primary light-induced photochemical processes of PSII. PSII is a light-driven water:plastoquinone oxidoreductase, using light energy to abstract electrons from H(2)O, generating O(2) and a proton gradient subsequently used for ATP formation. In Cryptomeria japonica (Japanese cedar), this protein is Photosystem II CP47 reaction center protein.